Here is a 201-residue protein sequence, read N- to C-terminus: NADH-ubiquinone oxidoreductase chain 6 (201 aa).

Helical transmembrane passes span 4–24, 28–48, 55–75, 88–108, and 151–171; these read LVLFYFFSGLSLVSASIVISV, VFSVVFLILVFFNVVGLLLLL, LLFLIVYVGAIAVLFLFVVMI, FYYAFFGSLIMAIFLFEIFII, and LFILSGFVLLVAILGAIILTL.

This sequence belongs to the complex I subunit 6 family.

It localises to the mitochondrion membrane. The catalysed reaction is a ubiquinone + NADH + 5 H(+)(in) = a ubiquinol + NAD(+) + 4 H(+)(out). Core subunit of the mitochondrial membrane respiratory chain NADH dehydrogenase (Complex I) that is believed to belong to the minimal assembly required for catalysis. Complex I functions in the transfer of electrons from NADH to the respiratory chain. The immediate electron acceptor for the enzyme is believed to be ubiquinone. The sequence is that of NADH-ubiquinone oxidoreductase chain 6 (ND6) from Cyanidium caldarium (Red alga).